We begin with the raw amino-acid sequence, 890 residues long: Leucine--tRNA ligase (890 aa).

The 'HIGH' region signature appears at 48–58 (PYPSGKLHMGH). Residues 645 to 649 (KMSKS) carry the 'KMSKS' region motif. Residue lysine 648 participates in ATP binding.

It belongs to the class-I aminoacyl-tRNA synthetase family.

The protein localises to the cytoplasm. It carries out the reaction tRNA(Leu) + L-leucine + ATP = L-leucyl-tRNA(Leu) + AMP + diphosphate. This is Leucine--tRNA ligase from Polynucleobacter necessarius subsp. necessarius (strain STIR1).